The following is a 165-amino-acid chain: MQRLATIAPPQVHEIWALLSQIPDPEIPVLTITDLGMVRNVTQMGEGWVIGFTPTYSGCPATEHLIGAIREAMTTNGFTPVQVVLQLDPAWTTDWMTPDARERLREYGISPPAGHSCHAHLPPEVRCPRCASVHTTLISEFGSTACKALYRCDSCREPFDYFKCI.

Monomer.

It participates in aromatic compound metabolism; phenylacetate degradation. In terms of biological role, possible component of 1,2-phenylacetyl-CoA epoxidase multicomponent enzyme system which catalyzes the reduction of phenylacetyl-CoA (PA-CoA) to form 1,2-epoxyphenylacetyl-CoA. The subunit D may have a function related to the maturation of the monooxygenase complex, rather than direct involvement in catalysis. PaaD could assist either in maturation of PaaE or PaaA. The protein is Putative 1,2-phenylacetyl-CoA epoxidase, subunit D (paaD) of Escherichia coli (strain K12).